We begin with the raw amino-acid sequence, 233 residues long: uncharacterized protein (233 aa).

An HTH gntR-type domain is found at 16–84; the sequence is KTLAKQVIER…TRGGTYFNDK (69 aa). The segment at residues 44 to 63 is a DNA-binding region (H-T-H motif); sequence EMELMDILHVSRPVLREALS.

This is an uncharacterized protein from Bacillus subtilis (strain 168).